The following is a 353-amino-acid chain: RNA 3'-terminal phosphate cyclase (353 aa).

ATP is bound by residues glutamine 103 and 297–301; that span reads HLADQ. The active-site Tele-AMP-histidine intermediate is the histidine 322.

This sequence belongs to the RNA 3'-terminal cyclase family. Type 1 subfamily.

The protein resides in the cytoplasm. It catalyses the reaction a 3'-end 3'-phospho-ribonucleotide-RNA + ATP = a 3'-end 2',3'-cyclophospho-ribonucleotide-RNA + AMP + diphosphate. In terms of biological role, catalyzes the conversion of 3'-phosphate to a 2',3'-cyclic phosphodiester at the end of RNA. The mechanism of action of the enzyme occurs in 3 steps: (A) adenylation of the enzyme by ATP; (B) transfer of adenylate to an RNA-N3'P to produce RNA-N3'PP5'A; (C) and attack of the adjacent 2'-hydroxyl on the 3'-phosphorus in the diester linkage to produce the cyclic end product. The biological role of this enzyme is unknown but it is likely to function in some aspects of cellular RNA processing. This chain is RNA 3'-terminal phosphate cyclase, found in Salmonella heidelberg (strain SL476).